The primary structure comprises 225 residues: Cell division protein SepF (225 aa).

The tract at residues 22–116 is disordered; the sequence is EYLDEPEPAR…TRGALAVDTR (95 aa). Basic and acidic residues-rich tracts occupy residues 28 to 54 and 77 to 86; these read EPAR…RDFA and RYDGPRHSSR.

It belongs to the SepF family. In terms of assembly, homodimer. Interacts with FtsZ.

The protein resides in the cytoplasm. In terms of biological role, cell division protein that is part of the divisome complex and is recruited early to the Z-ring. Probably stimulates Z-ring formation, perhaps through the cross-linking of FtsZ protofilaments. Its function overlaps with FtsA. This chain is Cell division protein SepF, found in Rhodococcus jostii (strain RHA1).